A 580-amino-acid chain; its full sequence is tRNA-guanine(15) transglycosylase (580 aa).

Residue Asp91 is the Nucleophile of the active site. Substrate-binding residues include Asp126 and Ala192. Positions 275, 277, and 280 each coordinate Zn(2+). The 76-residue stretch at 504-579 folds into the PUA domain; that stretch reads RMRVVVDEDA…LAVKVRRGVE (76 aa).

It belongs to the archaeosine tRNA-ribosyltransferase family. Zn(2+) is required as a cofactor.

The catalysed reaction is guanosine(15) in tRNA + 7-cyano-7-deazaguanine = 7-cyano-7-carbaguanosine(15) in tRNA + guanine. The protein operates within tRNA modification; archaeosine-tRNA biosynthesis. Functionally, exchanges the guanine residue with 7-cyano-7-deazaguanine (preQ0) at position 15 in the dihydrouridine loop (D-loop) of archaeal tRNAs. The chain is tRNA-guanine(15) transglycosylase from Thermococcus kodakarensis (strain ATCC BAA-918 / JCM 12380 / KOD1) (Pyrococcus kodakaraensis (strain KOD1)).